A 431-amino-acid chain; its full sequence is Histidinol dehydrogenase (431 aa).

The NAD(+) site is built by tyrosine 130, glutamine 191, and asparagine 214. 3 residues coordinate substrate: serine 237, glutamine 259, and histidine 262. 2 residues coordinate Zn(2+): glutamine 259 and histidine 262. Active-site proton acceptor residues include glutamate 327 and histidine 328. The substrate site is built by histidine 328, aspartate 361, glutamate 415, and histidine 420. Aspartate 361 is a Zn(2+) binding site. Histidine 420 serves as a coordination point for Zn(2+).

It belongs to the histidinol dehydrogenase family. Zn(2+) serves as cofactor.

The catalysed reaction is L-histidinol + 2 NAD(+) + H2O = L-histidine + 2 NADH + 3 H(+). The protein operates within amino-acid biosynthesis; L-histidine biosynthesis; L-histidine from 5-phospho-alpha-D-ribose 1-diphosphate: step 9/9. Functionally, catalyzes the sequential NAD-dependent oxidations of L-histidinol to L-histidinaldehyde and then to L-histidine. The chain is Histidinol dehydrogenase from Bradyrhizobium diazoefficiens (strain JCM 10833 / BCRC 13528 / IAM 13628 / NBRC 14792 / USDA 110).